Here is a 351-residue protein sequence, read N- to C-terminus: Nicotinate-nucleotide--dimethylbenzimidazole phosphoribosyltransferase (351 aa).

E317 (proton acceptor) is an active-site residue.

It belongs to the CobT family.

The catalysed reaction is 5,6-dimethylbenzimidazole + nicotinate beta-D-ribonucleotide = alpha-ribazole 5'-phosphate + nicotinate + H(+). It participates in nucleoside biosynthesis; alpha-ribazole biosynthesis; alpha-ribazole from 5,6-dimethylbenzimidazole: step 1/2. In terms of biological role, catalyzes the synthesis of alpha-ribazole-5'-phosphate from nicotinate mononucleotide (NAMN) and 5,6-dimethylbenzimidazole (DMB). In Bradyrhizobium sp. (strain ORS 278), this protein is Nicotinate-nucleotide--dimethylbenzimidazole phosphoribosyltransferase.